A 695-amino-acid polypeptide reads, in one-letter code: Amphiphysin (695 aa).

Coiled coils occupy residues 10 to 83 (AKNV…SLHE) and 144 to 191 (DYDS…QEEL). The BAR domain maps to 24-240 (VLQKLGKADE…MTKLGDQHAD (217 aa)). Disordered regions lie at residues 244-312 (TIQG…VTPT) and 486-617 (GAPG…EASQ). Residue Ser-252 is modified to Phosphoserine. Residue Thr-260 is modified to Phosphothreonine. The segment covering 261–274 (PSPPEEPSPLPSPT) has biased composition (pro residues). Phosphoserine occurs at positions 262, 268, 272, and 276. Thr-280 carries the phosphothreonine modification. A phosphoserine mark is found at Ser-506 and Ser-638. Residues 622–695 (GFLYKVETLH…FPENFTRRLD (74 aa)) enclose the SH3 domain.

As to quaternary structure, heterodimer with BIN1. Binds SH3GLB1. Interacts with REPS1 and SGIP1. Binds AP2A2. Interacts with AP2B1. Interacts with DNM1 and SYNJ1. As to expression, neurons, certain endocrine cell types and spermatocytes.

It localises to the cytoplasmic vesicle. The protein localises to the secretory vesicle. The protein resides in the synaptic vesicle membrane. It is found in the cytoplasm. Its subcellular location is the cytoskeleton. In terms of biological role, may participate in mechanisms of regulated exocytosis in synapses and certain endocrine cell types. May control the properties of the membrane associated cytoskeleton. The chain is Amphiphysin (AMPH) from Homo sapiens (Human).